The chain runs to 226 residues: 2-C-methyl-D-erythritol 4-phosphate cytidylyltransferase (226 aa).

This sequence belongs to the IspD/TarI cytidylyltransferase family. IspD subfamily.

The enzyme catalyses 2-C-methyl-D-erythritol 4-phosphate + CTP + H(+) = 4-CDP-2-C-methyl-D-erythritol + diphosphate. It functions in the pathway isoprenoid biosynthesis; isopentenyl diphosphate biosynthesis via DXP pathway; isopentenyl diphosphate from 1-deoxy-D-xylulose 5-phosphate: step 2/6. In terms of biological role, catalyzes the formation of 4-diphosphocytidyl-2-C-methyl-D-erythritol from CTP and 2-C-methyl-D-erythritol 4-phosphate (MEP). This is 2-C-methyl-D-erythritol 4-phosphate cytidylyltransferase from Actinobacillus pleuropneumoniae serotype 7 (strain AP76).